Reading from the N-terminus, the 448-residue chain is Proton extrusion protein PxcA (448 aa).

Helical transmembrane passes span 231–251 (ILLL…FFLI), 323–343 (IDSI…VLVL), 372–392 (LIIL…WEVI), and 408–428 (FNFL…KYWI).

It belongs to the CemA family.

Its subcellular location is the cell inner membrane. Its function is as follows. Required for H(+) efflux immediately after light irradiation to form a rapid H(+) concentration gradient across the thylakoid membranes. Together with PxcL, contributes to transient H(+) uptake following dark to light transition. This Rippkaea orientalis (strain PCC 8801 / RF-1) (Cyanothece sp. (strain PCC 8801)) protein is Proton extrusion protein PxcA.